The primary structure comprises 205 residues: Large ribosomal subunit protein uL4 (205 aa).

It belongs to the universal ribosomal protein uL4 family. Part of the 50S ribosomal subunit.

Functionally, one of the primary rRNA binding proteins, this protein initially binds near the 5'-end of the 23S rRNA. It is important during the early stages of 50S assembly. It makes multiple contacts with different domains of the 23S rRNA in the assembled 50S subunit and ribosome. In terms of biological role, forms part of the polypeptide exit tunnel. This is Large ribosomal subunit protein uL4 from Roseobacter denitrificans (strain ATCC 33942 / OCh 114) (Erythrobacter sp. (strain OCh 114)).